Consider the following 620-residue polypeptide: Ferric/cupric reductase transmembrane component 7 (620 aa).

The Extracellular portion of the chain corresponds to 1–45 (MIEERDLVLSNGIHCIADIHSELYARLKKESQAVTPWVYQKQYGK). A helical transmembrane segment spans residues 46–66 (FVTYFVAVIIFLSLIKKLAFM). Over 67–107 (YYDSSEEFLPEKKNSPTTPSVFLARIMTKLVAFNRYICYRK) the chain is Cytoplasmic. The chain crosses the membrane as a helical span at residues 108 to 128 (FPTLIFSYLGIPTSVGTFLVV). Residues 129–167 (MATTLYTLLYCFVPHPFYRPCAGFGSPPLSVRAGIMAIS) are Extracellular-facing. The region spanning 161–320 (AGIMAISLVS…LAVKGYLRPG (160 aa)) is the Ferric oxidoreductase domain. The chain crosses the membrane as a helical span at residues 168–188 (LVSFVFSLSGKINVIGWLVGL). Topologically, residues 189–194 (SYEKIN) are cytoplasmic. A helical membrane pass occupies residues 195-215 (IYHQWASILCLFFSWVHVIPF). Heme is bound by residues H197 and H211. At 216–237 (LRQARHEGGYERMHQRWKASDM) the chain is on the extracellular side. The chain crosses the membrane as a helical span at residues 238-258 (WRSGVPPILFLNLLWLSSLPI). Topologically, residues 259 to 265 (ARRHFYE) are cytoplasmic. A helical transmembrane segment spans residues 266 to 286 (IFLQLHWILAVGFYISLFYHV). H271 and H285 together coordinate heme. Residues 287 to 292 (YPELNS) lie on the Extracellular side of the membrane. The helical transmembrane segment at 293–313 (HMYLVATIVVWFAQLFYRLAV) threads the bilayer. Residues 314 to 620 (KGYLRPGRSF…CYLHSESFGY (307 aa)) lie on the Cytoplasmic side of the membrane. Positions 321–419 (RSFMASTIAN…DGPYGGIERD (99 aa)) constitute an FAD-binding FR-type domain. 369–375 (HPFSIFP) provides a ligand contact to FAD. The interval 519–544 (SDQSDLAKREKDTEFGQDDTESNSTF) is disordered. The span at 523-532 (DLAKREKDTE) shows a compositional bias: basic and acidic residues.

This sequence belongs to the ferric reductase (FRE) family. FAD is required as a cofactor.

It is found in the cell membrane. The catalysed reaction is 2 a Fe(II)-siderophore + NADP(+) + H(+) = 2 a Fe(III)-siderophore + NADPH. Functionally, cell surface metalloreductase. May be involved in copper homeostasis. This is Ferric/cupric reductase transmembrane component 7 (FRE7) from Saccharomyces cerevisiae (strain YJM789) (Baker's yeast).